The sequence spans 236 residues: MVKMEIRFHGHACFEIIGEKGRILIDPFLKGNPAADVGPEHFTHLDGILVSHGHSDHLGDAIELSQKTGAPLICVFELARLCARYGAKTHAMHIGGKHTFNFGTVRLTQALHGSVFEPPGEEESFTYAGMACGFLIQMDGKWIYHAGDTGLFGDMELIGRRHPLAAAMLPIGDNYTMGQEEAVYAATLLRPNYLIPMHYNTFPVIQQDPQEFSELLKRKFPASKGEILAPGQSLII.

It belongs to the UPF0173 family.

The protein is UPF0173 metal-dependent hydrolase DSY1309 of Desulfitobacterium hafniense (strain Y51).